The chain runs to 407 residues: Phosphopentomutase (407 aa).

Mn(2+)-binding residues include Asp10, Asp306, His311, Asp347, His348, and His359.

This sequence belongs to the phosphopentomutase family. Requires Mn(2+) as cofactor.

It localises to the cytoplasm. It carries out the reaction 2-deoxy-alpha-D-ribose 1-phosphate = 2-deoxy-D-ribose 5-phosphate. The catalysed reaction is alpha-D-ribose 1-phosphate = D-ribose 5-phosphate. It participates in carbohydrate degradation; 2-deoxy-D-ribose 1-phosphate degradation; D-glyceraldehyde 3-phosphate and acetaldehyde from 2-deoxy-alpha-D-ribose 1-phosphate: step 1/2. Isomerase that catalyzes the conversion of deoxy-ribose 1-phosphate (dRib-1-P) and ribose 1-phosphate (Rib-1-P) to deoxy-ribose 5-phosphate (dRib-5-P) and ribose 5-phosphate (Rib-5-P), respectively. This is Phosphopentomutase from Salmonella paratyphi C (strain RKS4594).